The following is a 279-amino-acid chain: 4-diphosphocytidyl-2-C-methyl-D-erythritol kinase (279 aa).

The active site involves Lys11. Pro95–Ser105 contacts ATP. Asp137 is a catalytic residue.

It belongs to the GHMP kinase family. IspE subfamily.

The enzyme catalyses 4-CDP-2-C-methyl-D-erythritol + ATP = 4-CDP-2-C-methyl-D-erythritol 2-phosphate + ADP + H(+). It participates in isoprenoid biosynthesis; isopentenyl diphosphate biosynthesis via DXP pathway; isopentenyl diphosphate from 1-deoxy-D-xylulose 5-phosphate: step 3/6. In terms of biological role, catalyzes the phosphorylation of the position 2 hydroxy group of 4-diphosphocytidyl-2C-methyl-D-erythritol. The polypeptide is 4-diphosphocytidyl-2-C-methyl-D-erythritol kinase (Geobacter sulfurreducens (strain ATCC 51573 / DSM 12127 / PCA)).